The chain runs to 106 residues: Large ribosomal subunit protein eL30 (106 aa).

Belongs to the eukaryotic ribosomal protein eL30 family.

This chain is Large ribosomal subunit protein eL30, found in Methanococcus maripaludis (strain C7 / ATCC BAA-1331).